We begin with the raw amino-acid sequence, 247 residues long: 2-amino-5-formylamino-6-ribosylaminopyrimidin-4(3H)-one 5'-monophosphate deformylase (247 aa).

Positions 41, 43, 52, and 121 each coordinate Fe cation.

It belongs to the creatininase superfamily. FAPy deformylase family. As to quaternary structure, homodimer. The cofactor is Fe(2+). It depends on Zn(2+) as a cofactor.

The enzyme catalyses 2-amino-5-formylamino-6-(5-phospho-D-ribosylamino)pyrimidin-4(3H)-one + H2O = 2,5-diamino-6-(1-D-ribosylamino)pyrimidin-4(3H)-one 5'-phosphate + formate + H(+). It participates in cofactor biosynthesis; coenzyme F420 biosynthesis. The protein operates within cofactor biosynthesis; riboflavin biosynthesis. In terms of biological role, catalyzes the hydrolysis of the formamide of 2-amino-5-formylamino-6-ribosylamino-4(3H)-pyrimidinone 5'-monophosphate (FAPy) to form 2,5-diamino-6-ribosylamino-4(3H)-pyrimidinone 5'-phosphate (APy). The protein is 2-amino-5-formylamino-6-ribosylaminopyrimidin-4(3H)-one 5'-monophosphate deformylase of Methanothermus fervidus (strain ATCC 43054 / DSM 2088 / JCM 10308 / V24 S).